We begin with the raw amino-acid sequence, 865 residues long: DNA topoisomerase 1 (865 aa).

One can recognise a Toprim domain in the interval 3–142 (KALVIVESPA…RYSRVVFNEI (140 aa)). Mg(2+) is bound at residue glutamate 9. Residues 37–65 (LPTSGSAAKKSADSTSTKTAKKPKKDERG) form a disordered region. A compositionally biased stretch (low complexity) spans 39–54 (TSGSAAKKSADSTSTK). Residue aspartate 111 coordinates Mg(2+). The Topo IA-type catalytic domain maps to 158–575 (NINRVNAQQA…NFFSDFTQQL (418 aa)). The tract at residues 192 to 197 (SAGRVQ) is interaction with DNA. The active-site O-(5'-phospho-DNA)-tyrosine intermediate is the tyrosine 319. 3 C4-type zinc fingers span residues 599–630 (CPTCGRKMGIRTASTGVFLGCSGYALSPKERC), 662–689 (CQKCGTAMDSYLIDPKRKLHVCGNNPTC), and 711–736 (CEKCGSEMHLKMGRFGKYMACTNDEC).

Belongs to the type IA topoisomerase family. In terms of assembly, monomer. Mg(2+) serves as cofactor.

It carries out the reaction ATP-independent breakage of single-stranded DNA, followed by passage and rejoining.. In terms of biological role, releases the supercoiling and torsional tension of DNA, which is introduced during the DNA replication and transcription, by transiently cleaving and rejoining one strand of the DNA duplex. Introduces a single-strand break via transesterification at a target site in duplex DNA. The scissile phosphodiester is attacked by the catalytic tyrosine of the enzyme, resulting in the formation of a DNA-(5'-phosphotyrosyl)-enzyme intermediate and the expulsion of a 3'-OH DNA strand. The free DNA strand then undergoes passage around the unbroken strand, thus removing DNA supercoils. Finally, in the religation step, the DNA 3'-OH attacks the covalent intermediate to expel the active-site tyrosine and restore the DNA phosphodiester backbone. The sequence is that of DNA topoisomerase 1 from Salmonella typhimurium (strain LT2 / SGSC1412 / ATCC 700720).